We begin with the raw amino-acid sequence, 261 residues long: MWFLILFPALSLGGIDAAPPLQSRVVGGFNCEKNSQPWQVAVYYQKEHICGGVLLDRNWVLTAAHCYVDQYEVWLGKNKLFQEEPSAQHRLVSKSFPHPGFNMSLLMLQTTPPGADFSNDLMLLRLSKPADITDVVKPIALPTKEPKPGSTCLASGWGSITPTRWQKSDDLQCVFITLLPNENCAKVYLQKVTDVMLCAGEMGGGKDTCAGDSGGPLICDGILQGTTSNGPEPCGKPGVPAIYTNLIKFNSWIKDTMMKNA.

Positions 1–18 (MWFLILFPALSLGGIDAA) are cleaved as a signal peptide. Residues 19–24 (PPLQSR) constitute a propeptide, activation peptide. A Peptidase S1 domain is found at 25-258 (VVGGFNCEKN…FNSWIKDTMM (234 aa)). 5 cysteine pairs are disulfide-bonded: C31/C173, C50/C66, C152/C219, C184/C198, and C209/C234. H65 (charge relay system) is an active-site residue. The N-linked (GlcNAc...) asparagine glycan is linked to N102. D120 acts as the Charge relay system in catalysis. S213 (charge relay system) is an active-site residue.

The protein belongs to the peptidase S1 family. Kallikrein subfamily.

The catalysed reaction is Preferential cleavage of Arg-|-Xaa bonds in small molecule substrates. Highly selective action to release kallidin (lysyl-bradykinin) from kininogen involves hydrolysis of Met-|-Xaa or Leu-|-Xaa.. Glandular kallikreins cleave Met-Lys and Arg-Ser bonds in kininogen to release Lys-bradykinin. Functionally, prorenin-converting enzyme cleaves mouse REN-2 prorenin at a dibasic site to yield mature renin. The chain is Kallikrein 1-related peptidase b26 (Klk1b26) from Mus musculus (Mouse).